A 993-amino-acid polypeptide reads, in one-letter code: Desmoglein-3 (993 aa).

Residues 1-23 form the signal peptide; it reads MTWLLFRTSGALAILMVLILVHG. Residues 24–48 constitute a propeptide that is removed on maturation; that stretch reads ELRIETKGQHGEDETAIQGRRRYKR. 4 Cadherin domains span residues 48-156, 157-266, 267-386, and 383-494; these read REWV…APVF, SQSI…FPMF, KESQ…HPAS, and HPAS…CPTV. Residues 49–617 lie on the Extracellular side of the membrane; it reads EWVKFAKPCR…GKRPSGRLGS (569 aa). N-linked (GlcNAc...) asparagine glycans are attached at residues N109 and N179. N-linked (GlcNAc...) asparagine glycans are attached at residues N458 and N544. The helical transmembrane segment at 618 to 638 threads the bilayer; that stretch reads AAIGLLLLGLLLLLLAPLLLL. At 639 to 993 the chain is on the cytoplasmic side; it reads TCDYGVGPIG…CTEDPCSRLI (355 aa). Residues 641-713 form a required for interaction with CTNND1 and localization at cell-cell junctions region; it reads DYGVGPIGGV…NTYAGGTVVE (73 aa). Desmoglein repeat repeat units follow at residues 903-929 and 930-960; these read LSASSSVLQSATSIPNPVQHGSYMVTE and TYSASGSLVQPTTTVLEPLLTQNVTVTERVI.

In terms of assembly, homodimer. Part of a complex that contains DSG3, PKP1, YAP1 and YWHAG; the complex is required for localization of DSG3 and YAP1 to the cell membrane in keratinocytes. Interacts with PKP2. Interacts with CTNND1; the interaction facilitates DSG3 localization and retention at cell-cell junctions. Interacts with CDH1; the interaction is required for CDH1 localization to developing adherens junctions. Interacts with RAC1; the interaction is required for DSG3 translocation to cell-cell junctions, organization of cortical F-actin bundles and actin anchoring at cell-cell junctions. Interacts with DSC3; the interaction may limit the interaction of DSC3 with p38MAPK family members and therefore repress p38MAPK signaling activation.

The protein resides in the cell membrane. It localises to the cell junction. The protein localises to the desmosome. It is found in the cytoplasm. Its subcellular location is the tight junction. In terms of biological role, a component of desmosome cell-cell junctions which are required for positive regulation of cellular adhesion. Required for adherens and desmosome junction assembly in response to mechanical force in keratinocytes. Required for desmosome-mediated cell-cell adhesion of cells surrounding the telogen hair club and the basal layer of the outer root sheath epithelium, consequently is essential for the anchoring of telogen hairs in the hair follicle. Required for the maintenance of the epithelial barrier via promoting desmosome-mediated intercellular attachment of suprabasal epithelium to basal cells. May play a role in the protein stability of the desmosome plaque components DSP, JUP, PKP1, PKP2 and PKP3. Required for YAP1 localization at the plasma membrane in keratinocytes in response to mechanical strain, via the formation of an interaction complex composed of DSG3, PKP1 and YWHAG. May also be involved in the positive regulation of YAP1 target gene transcription and as a result cell proliferation. Positively regulates cellular contractility and cell junction formation via organization of cortical F-actin bundles and anchoring of actin to tight junctions, in conjunction with RAC1. The cytoplasmic pool of DSG3 is required for the localization of CDH1 and CTNNB1 at developing adherens junctions, potentially via modulation of SRC activity. Inhibits keratinocyte migration via suppression of p38MAPK signaling, may therefore play a role in moderating wound healing. In Canis lupus familiaris (Dog), this protein is Desmoglein-3 (DSG3).